A 554-amino-acid chain; its full sequence is Valerianol synthase TPS1A (554 aa).

Aspartate 307 and aspartate 311 together coordinate Mg(2+). A DDXXD motif motif is present at residues valine 326–aspartate 330. Mg(2+) is bound by residues aspartate 452, serine 456, and glutamate 460.

The protein belongs to the terpene synthase family. Mg(2+) serves as cofactor. As to expression, expressed in flowers.

The catalysed reaction is (2E,6E)-farnesyl diphosphate + H2O = valerianol + diphosphate. It participates in secondary metabolite biosynthesis; terpenoid biosynthesis. Functionally, terpene synthase that catalyzes the biosynthesis of the terpene valerianol, which is a volatile compound of floral scent. The sequence is that of Valerianol synthase TPS1A from Camellia hiemalis (Camellia).